The sequence spans 751 residues: Large T antigen (751 aa).

An N-acetylmethionine; by host modification is found at Met1. The J domain occupies 12–75 (ALISLLDLEP…LYRVRLLLGP (64 aa)). Residues 130-134 (LTCQE) form a binding to host RB1 protein and transforming activity region. Residues 133–143 (QEELSSSEDEF) are compositionally biased toward acidic residues. Residues 133–260 (QEELSSSEDE…PKKPPPTVSP (128 aa)) form a disordered region. Residues 155-165 (VSISSDSSSSS) are compositionally biased toward low complexity. Residues 219–232 (RESQSTFGSYFNST) are compositionally biased toward polar residues. The residue at position 245 (Ser245) is a Phosphoserine; by host. A Phosphothreonine; by host modification is found at Thr249. Residues 251–257 (PKKPPPT) carry the Nuclear localization signal motif. The segment at residues 264–380 (PTILRGFLSH…KENKPGLYHF (117 aa)) is a DNA-binding region (T-ag OBD). The segment at 389 to 483 (VKQIDWNFLT…RRLKVLESTR (95 aa)) adopts a T-ag D1-type zinc-finger fold. 4 residues coordinate Zn(2+): Cys426, Cys429, His439, and His443. The SF3 helicase domain maps to 522-682 (DFEMMLLDIL…DFLAKSLEEN (161 aa)). 548-555 (GPVNSGKT) serves as a coordination point for ATP.

In terms of assembly, forms homohexamers in the presence of ATP. Interacts with host HDAC1. Interacts (via LXCXE domain) with host RB1; the interaction induces the aberrant dissociation of RB1-E2F1 complex thereby disrupting RB1's activity. Interacts (via LXCXE domain) with host pRB-related proteins RBL1 and RBL2. Interacts (via C-terminus) with host TOP1 and POLA1 allowing DNA replication. Interacts with host preinitiation complex components TBP, TFIIA and TFIID to regulate transcription initiation. Mg(2+) serves as cofactor. Post-translationally, phosphorylated on both serine and threonine residues. Small t antigen inhibits the dephosphorylation by the AC form of PP2A. In terms of processing, O-Glycosylated near the C-terminal region. Acetylated by CBP in a TP53-dependent manner.

Its subcellular location is the host nucleus. The enzyme catalyses Couples ATP hydrolysis with the unwinding of duplex DNA by translocating in the 3'-5' direction.. The catalysed reaction is ATP + H2O = ADP + phosphate + H(+). Isoform large T antigen is a key early protein essential for both driving viral replication and inducing cellular transformation. Plays a role in viral genome replication by driving entry of quiescent cells into the cell cycle and by autoregulating the synthesis of viral early mRNA. Displays highly oncogenic activities by corrupting the host cellular checkpoint mechanisms that guard cell division and the transcription, replication, and repair of DNA. Participates in the modulation of cellular gene expression preceeding viral DNA replication. This step involves binding to host key cell cycle regulators retinoblastoma protein RB1/pRb and TP53. Induces the disassembly of host E2F1 transcription factors from RB1, thus promoting transcriptional activation of E2F1-regulated S-phase genes. Inhibits host TP53 binding to DNA, abrogating the ability of TP53 to stimulate gene expression. Plays the role of a TFIID-associated factor (TAF) in transcription initiation for all three RNA polymerases, by stabilizing the TBP-TFIIA complex on promoters. Initiates viral DNA replication and unwinding via interactions with the viral origin of replication. Binds two adjacent sites in the SV40 origin. The replication fork movement is facilitated by Large T antigen helicase activity. Has processive 3'-5' DNA helicase activity which requires a short 3' single-stranded region and ATP. Activates the transcription of viral late mRNA, through host TBP and TFIIA stabilization. Interferes with histone deacetylation mediated by HDAC1, leading to activation of transcription. The protein is Large T antigen of Mesocricetus auratus (Golden hamster).